We begin with the raw amino-acid sequence, 194 residues long: Protein GrpE (194 aa).

Composition is skewed to basic and acidic residues over residues 1-19 (MSKE…ENTS) and 26-44 (KKEA…NQKL). Positions 1–44 (MSKEEFPSEKNLDKEENTSKPKKAVKKEAAKGEETKKNNENQKL) are disordered.

It belongs to the GrpE family. In terms of assembly, homodimer.

The protein resides in the cytoplasm. Functionally, participates actively in the response to hyperosmotic and heat shock by preventing the aggregation of stress-denatured proteins, in association with DnaK and GrpE. It is the nucleotide exchange factor for DnaK and may function as a thermosensor. Unfolded proteins bind initially to DnaJ; upon interaction with the DnaJ-bound protein, DnaK hydrolyzes its bound ATP, resulting in the formation of a stable complex. GrpE releases ADP from DnaK; ATP binding to DnaK triggers the release of the substrate protein, thus completing the reaction cycle. Several rounds of ATP-dependent interactions between DnaJ, DnaK and GrpE are required for fully efficient folding. This is Protein GrpE from Lactobacillus acidophilus (strain ATCC 700396 / NCK56 / N2 / NCFM).